The sequence spans 149 residues: UPF0102 protein Bpro_0391 (149 aa).

The tract at residues 1–30 (MWFSRKQVVKPPPDGSRAQPGQVTTKSRGD) is disordered.

The protein belongs to the UPF0102 family.

In Polaromonas sp. (strain JS666 / ATCC BAA-500), this protein is UPF0102 protein Bpro_0391.